A 345-amino-acid polypeptide reads, in one-letter code: Dihydroorotase (345 aa).

Zn(2+) contacts are provided by H13 and H15. Residues 15–17 and N41 contribute to the substrate site; that span reads HFR. 3 residues coordinate Zn(2+): K98, H135, and H173. K98 carries the post-translational modification N6-carboxylysine. Residue H135 coordinates substrate. L218 is a substrate binding site. Zn(2+) is bound at residue D246. The active site involves D246. Residues H250 and A262 each coordinate substrate.

It belongs to the metallo-dependent hydrolases superfamily. DHOase family. Class II DHOase subfamily. Homodimer. Zn(2+) serves as cofactor.

The enzyme catalyses (S)-dihydroorotate + H2O = N-carbamoyl-L-aspartate + H(+). It participates in pyrimidine metabolism; UMP biosynthesis via de novo pathway; (S)-dihydroorotate from bicarbonate: step 3/3. Catalyzes the reversible cyclization of carbamoyl aspartate to dihydroorotate. In Shewanella piezotolerans (strain WP3 / JCM 13877), this protein is Dihydroorotase.